The primary structure comprises 424 residues: Double-stranded RNA-binding protein 8 (424 aa).

Over residues 1-10 (MDMPPTPLPP) the composition is skewed to pro residues. Positions 1–22 (MDMPPTPLPPETANTSPAPNGA) are disordered. DRBM domains follow at residues 33 to 102 (VFKS…EIVK) and 118 to 185 (LCKN…AIQG). 2 stretches are compositionally biased toward basic and acidic residues: residues 287–308 (KRVE…ENQH) and 318–328 (DEARVEQEPSR). The tract at residues 287 to 330 (KRVEAEPPRDIEMVQPDKENQHSDAALVQPDDEARVEQEPSRDI) is disordered.

Its function is as follows. Binds double-stranded RNA. The chain is Double-stranded RNA-binding protein 8 (DRB8) from Oryza sativa subsp. japonica (Rice).